The following is a 102-amino-acid chain: Urease subunit beta (102 aa).

The protein belongs to the urease beta subunit family. In terms of assembly, heterotrimer of UreA (gamma), UreB (beta) and UreC (alpha) subunits. Three heterotrimers associate to form the active enzyme.

The protein resides in the cytoplasm. The enzyme catalyses urea + 2 H2O + H(+) = hydrogencarbonate + 2 NH4(+). It functions in the pathway nitrogen metabolism; urea degradation; CO(2) and NH(3) from urea (urease route): step 1/1. The chain is Urease subunit beta from Pseudomonas savastanoi pv. phaseolicola (strain 1448A / Race 6) (Pseudomonas syringae pv. phaseolicola (strain 1448A / Race 6)).